We begin with the raw amino-acid sequence, 489 residues long: MEMETSVLGLSSTLIIALAITVIFLLKAKSSSAIKWPPGPKTLPIIGNLHQLGGDELHIVLAKLARVHGAIMTIWMAKKPVIVVSDVNSVWEVLVSKSSDYAARDAAEISKIVSASSHSINTSDSGPYWQTLRRGLTHGPLGPLNISAQIPIQQRDMQRVIREMQQDAAANGGVIKPLDHLKRSSTRLVSRLIFGDTFDNDPYNDSMHEVVQDLNRFGGIALLEQAFSFAKYLPSYKRGVKEFHIHKRKIDDLVRPVVASSNPPSNSYLGFLQSQNYSEEIIIACIFELYLLAMDSSASTATWALAFMIRDQQVQEKLYQDIKRVIGDEVGLVKAEDLSKMHYLQAVVKETMRMKPIAPLAIPHKTAIDTSLMGTKVPKGTCVMVNLYALHHDESVWAKPYTFMPERFLQREDGKSVTEQAFLPFGAGMRICGGMEVGKLQFSLALANLVNAFKWTSAAEGKLPDMSDELQFITVMKTPLEARIVPRNP.

Residues 6 to 26 (SVLGLSSTLIIALAITVIFLL) form a helical membrane-spanning segment. Cys432 contributes to the heme binding site.

Belongs to the cytochrome P450 family. Heme serves as cofactor.

The protein localises to the membrane. The catalysed reaction is (-)-matairesinol + reduced [NADPH--hemoprotein reductase] + O2 = (-)-pluviatolide + oxidized [NADPH--hemoprotein reductase] + 2 H2O + H(+). Its pathway is aromatic compound metabolism; phenylpropanoid biosynthesis. Its function is as follows. Cytochrome P450 involved in the biosynthesis of etoposide, a chemotherapeutic compound of the topoisomerase inhibitor family. Catalyzes the conversion of matairesinol to pluviatolide. This Podophyllum peltatum (American mandrake) protein is Pluviatolide synthase.